We begin with the raw amino-acid sequence, 298 residues long: ATP synthase gamma chain (298 aa).

It belongs to the ATPase gamma chain family. As to quaternary structure, F-type ATPases have 2 components, CF(1) - the catalytic core - and CF(0) - the membrane proton channel. CF(1) has five subunits: alpha(3), beta(3), gamma(1), delta(1), epsilon(1). CF(0) has three main subunits: a, b and c.

It localises to the cell membrane. Produces ATP from ADP in the presence of a proton gradient across the membrane. The gamma chain is believed to be important in regulating ATPase activity and the flow of protons through the CF(0) complex. This Parafrankia sp. (strain EAN1pec) protein is ATP synthase gamma chain.